We begin with the raw amino-acid sequence, 159 residues long: SsrA-binding protein (159 aa).

Belongs to the SmpB family.

It is found in the cytoplasm. Its function is as follows. Required for rescue of stalled ribosomes mediated by trans-translation. Binds to transfer-messenger RNA (tmRNA), required for stable association of tmRNA with ribosomes. tmRNA and SmpB together mimic tRNA shape, replacing the anticodon stem-loop with SmpB. tmRNA is encoded by the ssrA gene; the 2 termini fold to resemble tRNA(Ala) and it encodes a 'tag peptide', a short internal open reading frame. During trans-translation Ala-aminoacylated tmRNA acts like a tRNA, entering the A-site of stalled ribosomes, displacing the stalled mRNA. The ribosome then switches to translate the ORF on the tmRNA; the nascent peptide is terminated with the 'tag peptide' encoded by the tmRNA and targeted for degradation. The ribosome is freed to recommence translation, which seems to be the essential function of trans-translation. The chain is SsrA-binding protein from Frankia casuarinae (strain DSM 45818 / CECT 9043 / HFP020203 / CcI3).